A 176-amino-acid chain; its full sequence is NAD(P)H-quinone oxidoreductase subunit 6, chloroplastic (176 aa).

Helical transmembrane passes span 10–30 (ILML…VLLT), 33–53 (IYSA…YFLL), 60–80 (VAQL…AVMF), 95–115 (IGDG…MTTI), and 152–172 (FYLP…GAIT).

Belongs to the complex I subunit 6 family. In terms of assembly, NDH is composed of at least 16 different subunits, 5 of which are encoded in the nucleus.

The protein resides in the plastid. The protein localises to the chloroplast thylakoid membrane. It carries out the reaction a plastoquinone + NADH + (n+1) H(+)(in) = a plastoquinol + NAD(+) + n H(+)(out). It catalyses the reaction a plastoquinone + NADPH + (n+1) H(+)(in) = a plastoquinol + NADP(+) + n H(+)(out). Its function is as follows. NDH shuttles electrons from NAD(P)H:plastoquinone, via FMN and iron-sulfur (Fe-S) centers, to quinones in the photosynthetic chain and possibly in a chloroplast respiratory chain. The immediate electron acceptor for the enzyme in this species is believed to be plastoquinone. Couples the redox reaction to proton translocation, and thus conserves the redox energy in a proton gradient. The polypeptide is NAD(P)H-quinone oxidoreductase subunit 6, chloroplastic (ndhG) (Lolium perenne (Perennial ryegrass)).